We begin with the raw amino-acid sequence, 908 residues long: Serine/threonine-protein kinase minibrain (908 aa).

Disordered regions lie at residues 1-46 (MYRL…QRHA) and 119-143 (KKRR…LYND). The Bipartite nuclear localization signal signature appears at 121 to 139 (RRAQQTQGDDDSSNKKERK). Residues 132–141 (SSNKKERKLY) are compositionally biased toward basic and acidic residues. In terms of domain architecture, Protein kinase spans 164–484 (YEIDSLIGKG…PYYALQHNFF (321 aa)). Residues 170 to 178 (IGKGSFGQV), K193, and 243 to 246 (FELL) each bind ATP. D292 serves as the catalytic Proton acceptor. Disordered stretches follow at residues 552-592 (AAGS…AGPG), 623-669 (NAHP…RHSR), and 863-895 (PAAQ…SSPM). Residues 556-566 (SGSGSSVGGGS) show a composition bias toward gly residues. The segment covering 567–576 (SAAQQQQAMP) has biased composition (low complexity). Residues 577–589 (LPLPLPLPLPPLA) are compositionally biased toward pro residues. Over residues 623–654 (NAHPPPSLANSHHSTNSLGSLNHISPGSTGCH) the composition is skewed to polar residues. Low complexity-rich tracts occupy residues 655 to 664 (NNNSNSSNNN) and 868 to 893 (GISQ…SSSS).

The protein belongs to the protein kinase superfamily. CMGC Ser/Thr protein kinase family. MNB/DYRK subfamily. In ventral nerve cord and supraesophageal ganglion of embryos. Is most prominent in the mushroom body neuropil and the outer proliferation center of the optic lobes in third instar larvae.

It localises to the nucleus. It catalyses the reaction L-seryl-[protein] + ATP = O-phospho-L-seryl-[protein] + ADP + H(+). It carries out the reaction L-threonyl-[protein] + ATP = O-phospho-L-threonyl-[protein] + ADP + H(+). The enzyme catalyses L-tyrosyl-[protein] + ATP = O-phospho-L-tyrosyl-[protein] + ADP + H(+). Its function is as follows. Role in the specific control of proper proliferation of optic lobe neuronal progeny. The polypeptide is Serine/threonine-protein kinase minibrain (mnb) (Drosophila melanogaster (Fruit fly)).